We begin with the raw amino-acid sequence, 218 residues long: Pyridoxine/pyridoxamine 5'-phosphate oxidase (218 aa).

Residues 11 to 14 (RVEY) and lysine 75 each bind substrate. FMN contacts are provided by residues 70 to 75 (RTVLCK), 85 to 86 (YT), lysine 92, and glutamine 114. The substrate site is built by tyrosine 132, arginine 136, and serine 140. Residues 149-150 (QS) and tryptophan 195 each bind FMN. Substrate is bound at residue 201 to 203 (RVH). Residue arginine 205 coordinates FMN.

Belongs to the pyridoxamine 5'-phosphate oxidase family. As to quaternary structure, homodimer. It depends on FMN as a cofactor.

It catalyses the reaction pyridoxamine 5'-phosphate + O2 + H2O = pyridoxal 5'-phosphate + H2O2 + NH4(+). The catalysed reaction is pyridoxine 5'-phosphate + O2 = pyridoxal 5'-phosphate + H2O2. It functions in the pathway cofactor metabolism; pyridoxal 5'-phosphate salvage; pyridoxal 5'-phosphate from pyridoxamine 5'-phosphate: step 1/1. It participates in cofactor metabolism; pyridoxal 5'-phosphate salvage; pyridoxal 5'-phosphate from pyridoxine 5'-phosphate: step 1/1. Its function is as follows. Catalyzes the oxidation of either pyridoxine 5'-phosphate (PNP) or pyridoxamine 5'-phosphate (PMP) into pyridoxal 5'-phosphate (PLP). This is Pyridoxine/pyridoxamine 5'-phosphate oxidase from Mycolicibacterium gilvum (strain PYR-GCK) (Mycobacterium gilvum (strain PYR-GCK)).